Here is a 193-residue protein sequence, read N- to C-terminus: Probable GTP-binding protein EngB (193 aa).

Residues 22–193 (MYPEISFIGR…ELWQIIEDLL (172 aa)) form the EngB-type G domain. GTP is bound by residues 30–37 (GRSNVGKS), 57–61 (GKTRT), 75–78 (DLPG), 142–145 (TKMD), and 174–176 (FSS). S37 and T59 together coordinate Mg(2+).

It belongs to the TRAFAC class TrmE-Era-EngA-EngB-Septin-like GTPase superfamily. EngB GTPase family. The cofactor is Mg(2+).

Necessary for normal cell division and for the maintenance of normal septation. This Natranaerobius thermophilus (strain ATCC BAA-1301 / DSM 18059 / JW/NM-WN-LF) protein is Probable GTP-binding protein EngB.